The primary structure comprises 486 residues: CREB-regulated transcription coactivator 1 homolog (486 aa).

A disordered region spans residues 1 to 62 (MSNSNTPRKF…APMPIPQQGL (62 aa)). Residues 9–23 (KFSEKIAILERKQNE) are compositionally biased toward basic and acidic residues. Positions 34 to 52 (QVQSITHHPTDSSGSSTAT) are enriched in polar residues. The residue at position 76 (Ser-76) is a Phosphoserine; by AMPK. The disordered stretch occupies residues 103–166 (PIQGHRSRSP…PPYNQPGQLV (64 aa)). Pro residues predominate over residues 144–160 (RTPPQHPQYTPYGPPYN). Position 179 is a phosphoserine; by AMPK (Ser-179). 3 disordered regions span residues 214–278 (SMPG…QSPN), 327–417 (FNQD…SNSP), and 460–486 (APPQTISNHQTPNNSFHDPGGTQMLQN). 3 stretches are compositionally biased toward polar residues: residues 224–245 (PNSQSQQHSPQLTPQGSQQGSP), 387–402 (PESQSAPTSPHNQLDP), and 461–475 (PPQTISNHQTPNNSF).

Belongs to the TORC family. In terms of assembly, interacts with crh-1. Post-translationally, phosphorylated by AMPK at Ser-76 and Ser-179. Dephosphorylated by tax-6, the catalytic subunit of calcineurin. As to expression, expressed throughout the intestine and in head and tail neurons. Expressed in octopaminergic RIC neurons.

It is found in the nucleus. It localises to the cytoplasm. Its subcellular location is the cytosol. In terms of biological role, transcriptional coactivator for crh-1, the homolog of vertebrate transcription factor CREB1. Regulates the transcription of metabolic genes and may have a role in mitochondrial dynamics and metabolism. Involved in modulation of lifespan. Through crh-1, counteracts the pro-lifespan-extension signals of AMPK both cell autonomously and, when expressed in neurons, at a systemic level, possibly using the catecholamine analog, octopamine, as a messenger. This is CREB-regulated transcription coactivator 1 homolog from Caenorhabditis elegans.